Reading from the N-terminus, the 260-residue chain is Dehydrogenase/reductase SDR family member 4 (260 aa).

Position 18 to 42 (18 to 42 (IVTASTDGIGLAIARRLAQDGAHVV)) interacts with NADP(+). K74 is subject to N6-acetyllysine; alternate. K74 bears the N6-succinyllysine; alternate mark. S151 is a substrate binding site. The active-site Proton acceptor is the Y164. K168 serves as a coordination point for NADP(+). K198 carries the post-translational modification N6-acetyllysine; alternate. K198 carries the N6-succinyllysine; alternate modification. S202 carries the phosphoserine modification. K209 carries the N6-succinyllysine modification. The Peroxisomal targeting signal signature appears at 258–260 (SRL).

The protein belongs to the short-chain dehydrogenases/reductases (SDR) family. In terms of assembly, homotetramer. As to expression, detected in liver and kidney. Detected at lower levels in heart, lung, spleen, small intestine, testis, brain and stomach.

Its subcellular location is the peroxisome. It carries out the reaction a secondary alcohol + NADP(+) = a ketone + NADPH + H(+). The enzyme catalyses 3alpha-hydroxy-5beta-pregnan-20-one + NADP(+) = 5beta-pregnan-3,20-dione + NADPH + H(+). It catalyses the reaction 5beta-dihydrotestosterone + NADPH + H(+) = 5beta-androstane-3alpha,17beta-diol + NADP(+). The catalysed reaction is all-trans-retinol + NADP(+) = all-trans-retinal + NADPH + H(+). It carries out the reaction isatin + NADPH + H(+) = 3-hydroxyindolin-2-one + NADP(+). Its activity is regulated as follows. Inhibited by flavonoids (kaempferol, quercetin, quercitrin, genistein), myristic acid, pyrazole, barbital, phenobarbital and CuSO4. Functionally, NADPH-dependent oxidoreductase which catalyzes the reduction of a variety of compounds bearing carbonyl groups including ketosteroids, alpha-dicarbonyl compounds, aldehydes, aromatic ketones and quinones. Reduces all-trans-retinal and 9-cis retinal. Reduces 3-ketosteroids and benzil into 3alpha-hydroxysteroids and S-benzoin, respectively, in contrast to the stereoselectivity of primates DHRS4s which produce 3beta-hydroxysteroids and R-benzoin. In the reverse reaction, catalyze the NADP-dependent oxidation of 3alpha-hydroxysteroids and alcohol, but with much lower efficiency. Involved in the metabolism of 3alpha-hydroxysteroids, retinoid, isatin and xenobiotic carbonyl compounds. This Oryctolagus cuniculus (Rabbit) protein is Dehydrogenase/reductase SDR family member 4 (DHRS4).